A 422-amino-acid polypeptide reads, in one-letter code: Putative serpin-Z8 (422 aa).

The RCL stretch occupies residues 369-393 (GTVAAAATMTRMLPSGVPPPPVDFV).

The protein belongs to the serpin family.

Probable serine protease inhibitor. The polypeptide is Putative serpin-Z8 (Oryza sativa subsp. japonica (Rice)).